A 616-amino-acid chain; its full sequence is Chaperone protein HtpG (616 aa).

The tract at residues 1–333 (MKKQFDTEVN…CQDLPLNVSR (333 aa)) is a; substrate-binding. Residues 334–542 (EILQQNKILS…SNDPTYQMQK (209 aa)) are b. The interval 543 to 616 (IMLSMGQEVK…INEFIEKDFL (74 aa)) is c.

This sequence belongs to the heat shock protein 90 family. As to quaternary structure, homodimer.

It is found in the cytoplasm. Its function is as follows. Molecular chaperone. Has ATPase activity. This Borreliella burgdorferi (strain ATCC 35210 / DSM 4680 / CIP 102532 / B31) (Borrelia burgdorferi) protein is Chaperone protein HtpG.